The chain runs to 160 residues: D-aminoacyl-tRNA deacylase 2 (160 aa).

Residues 152-153 carry the Gly-transPro motif, allows the protein to recognize chirality of D-amino acids motif; that stretch reads GP.

The protein belongs to the DTD family. Homodimer.

Its subcellular location is the cytoplasm. The enzyme catalyses a D-aminoacyl-tRNA + H2O = a tRNA + a D-alpha-amino acid + H(+). It carries out the reaction glycyl-tRNA(Ala) + H2O = tRNA(Ala) + glycine + H(+). The catalysed reaction is D-tyrosyl-tRNA(Tyr) + H2O = D-tyrosine + tRNA(Tyr). It catalyses the reaction L-alanyl-tRNA(Thr) + H2O = tRNA(Thr) + L-alanine + H(+). Deacylates mischarged D-aminoacyl-tRNAs. Also deacylates mischarged glycyl-tRNA(Ala), protecting cells against glycine mischarging by AlaRS. Probably acts by rejecting L-amino acids from its binding site rather than specific recognition of D-amino acids. Catalyzes the hydrolysis of D-tyrosyl-tRNA(Tyr), has no activity on correctly charged L-tyrosyl-tRNA(Tyr). By recycling D-aminoacyl-tRNA to D-amino acids and free tRNA molecules, this enzyme counteracts the toxicity associated with the formation of D-aminoacyl-tRNA entities in vivo and helps enforce protein L-homochirality. In contrast to DTD1, deacylates L-Ala mischarged on tRNA(Thr)(G4.U69) by alanine-tRNA ligase AARS. Can deacylate L-Ala due to a relaxed specificity for substrate chirality caused by the trans conformation of the Gly-Pro motif in the active site. Also hydrolyzes correctly charged, achiral, glycyl-tRNA(Gly) in vitro, although in vivo eef1a1a/EF-Tu may protect cognate achiral glycyl-tRNA(Gly) from DTD2-mediated deacetylation. This chain is D-aminoacyl-tRNA deacylase 2 (dtd2), found in Danio rerio (Zebrafish).